The following is a 1259-amino-acid chain: Ankyrin repeat and sterile alpha motif domain-containing protein 1B (1259 aa).

7 ANK repeats span residues 2 to 31 (GKDQELLEAARTGNVALVEKLLSGRKGGIL), 58 to 87 (SGYTALHHAALNGHKDIVLKLLQYEASTNV), 91 to 120 (KGYFPIHLAAWKGDVEIVKILIHHGPSHSR), 127 to 156 (ENETALHCAAQYGHSEVVAVLLEELTDPTI), 160 to 189 (KLETPLDLAALYGRLRVVKMIISAHPNLMS), 193 to 222 (RKHTPLHLAARNGHKAVVQVLLEAGMDVSC), and 225 to 254 (EKGSALHEAALFGKVDVVRVLLETGIDANI). The interval 298 to 325 (HAQEDTAQETHLSSPAESPQKTKSETVT) is disordered. Over residues 306–325 (ETHLSSPAESPQKTKSETVT) the composition is skewed to polar residues. Residues Ser310, Ser311, Ser315, Ser353, and Ser364 each carry the phosphoserine modification. 4 disordered regions span residues 367 to 401 (ELGKNGSQSVRTSSTINLSPGEVEDEEEDPNSCGP), 490 to 513 (PGTSHHRNSSTGPTPDCSPPSPDT), 556 to 614 (CTSF…GSSP), and 631 to 661 (TCEDGPDEASLANSPLPFKQTPIENNPEPSV). The segment covering 371-384 (NGSQSVRTSSTINL) has biased composition (polar residues). Thr503 carries the post-translational modification Phosphothreonine. Ser507 and Ser510 each carry phosphoserine. The segment covering 556-574 (CTSFTSSPAASPPTSSVET) has biased composition (low complexity). Positions 575–587 (TEVKNEGAEHADD) are enriched in basic and acidic residues. Ser738 carries the phosphoserine modification. Positions 753–776 (VNWSKSSTAERSSKDNSERTPSFT) are disordered. Thr772 is modified (phosphothreonine). Ser774 carries the post-translational modification Phosphoserine. SAM domains follow at residues 809 to 875 (CPVQ…LPKM) and 883 to 948 (YHPT…RLHD). Tyr900 is modified (phosphotyrosine). Residue His934 is a short sequence motif, nuclear localization signal. Residues 943 to 988 (GDRLHDDPPQKPPRSITLREPSGNHTPPQLSPSLSQSTYTTGGSLD) form a disordered region. Residues 968 to 983 (TPPQLSPSLSQSTYTT) are compositionally biased toward low complexity. Residue Ser973 is modified to Phosphoserine. Tyr1006 carries the phosphotyrosine modification. One can recognise a PID domain in the interval 1055–1212 (IFQSCDYKAF…SFENKPSKPI (158 aa)). Positions 1196–1216 (HSSTLPESFENKPSKPIPKPR) are disordered.

Interacts with EPHA8. Isoform 2 interacts with COIL.

It is found in the cytoplasm. The protein localises to the nucleus. Its subcellular location is the postsynaptic density. It localises to the cell projection. The protein resides in the dendritic spine. Its function is as follows. Isoform 2 may participate in the regulation of nucleoplasmic coilin protein interactions in neuronal and transformed cells. The protein is Ankyrin repeat and sterile alpha motif domain-containing protein 1B (Anks1b) of Mus musculus (Mouse).